Consider the following 212-residue polypeptide: FMN-dependent NADH:quinone oxidoreductase 1 (212 aa).

FMN is bound by residues S10, 16–18 (SHS), 97–100 (MYNF), and 145–148 (SRGG).

Belongs to the azoreductase type 1 family. Homodimer. Requires FMN as cofactor.

The enzyme catalyses 2 a quinone + NADH + H(+) = 2 a 1,4-benzosemiquinone + NAD(+). The catalysed reaction is N,N-dimethyl-1,4-phenylenediamine + anthranilate + 2 NAD(+) = 2-(4-dimethylaminophenyl)diazenylbenzoate + 2 NADH + 2 H(+). Quinone reductase that provides resistance to thiol-specific stress caused by electrophilic quinones. In terms of biological role, also exhibits azoreductase activity. Catalyzes the reductive cleavage of the azo bond in aromatic azo compounds to the corresponding amines. This chain is FMN-dependent NADH:quinone oxidoreductase 1, found in Pseudomonas fluorescens (strain Pf0-1).